The chain runs to 107 residues: Protein Asterix (107 aa).

Residues 1-15 are compositionally biased toward polar residues; that stretch reads MSHSHGNASSVNDPR. The segment at 1–25 is disordered; it reads MSHSHGNASSVNDPRQPSAAKPYIP. The chain crosses the membrane as a helical span at residues 82–98; that stretch reads ISMAMMFAIMGLVTNYL.

The protein belongs to the Asterix family.

It is found in the membrane. This is Protein Asterix from Arabidopsis thaliana (Mouse-ear cress).